A 389-amino-acid chain; its full sequence is Putative nickel insertion protein (389 aa).

It belongs to the LarC family.

This Desulfotalea psychrophila (strain LSv54 / DSM 12343) protein is Putative nickel insertion protein.